Here is a 178-residue protein sequence, read N- to C-terminus: Large ribosomal subunit protein uL5 (178 aa).

Belongs to the universal ribosomal protein uL5 family. Part of the 50S ribosomal subunit; part of the 5S rRNA/L5/L18/L25 subcomplex. Contacts the 5S rRNA and the P site tRNA. Forms a bridge to the 30S subunit in the 70S ribosome.

Its function is as follows. This is one of the proteins that bind and probably mediate the attachment of the 5S RNA into the large ribosomal subunit, where it forms part of the central protuberance. In the 70S ribosome it contacts protein S13 of the 30S subunit (bridge B1b), connecting the 2 subunits; this bridge is implicated in subunit movement. Contacts the P site tRNA; the 5S rRNA and some of its associated proteins might help stabilize positioning of ribosome-bound tRNAs. This chain is Large ribosomal subunit protein uL5, found in Psychrobacter cryohalolentis (strain ATCC BAA-1226 / DSM 17306 / VKM B-2378 / K5).